The sequence spans 244 residues: Gas vesicle protein F (244 aa).

The segment at 1 to 109 is N-terminus; the sequence is MTVGLYLYGI…QLKELFAKLS (109 aa). The tract at residues 110–233 is C-terminus, modifed ferredoxin fold; sequence GQREVSIKIF…GDRLRIRYNN (124 aa). The tract at residues 234-244 is C-tail; the sequence is LTAPYTFAQLI.

The protein belongs to the gas vesicle GvpF/GvpL family. In terms of assembly, binds GvpA.

Its subcellular location is the gas vesicle. Its function is as follows. A minor component of the gas vesicle, may be involved in preventing GvpA aggregation during gas vesicle nucleation. Gas vesicles (GV) are hollow, gas filled proteinaceous nanostructures. During planktonic growth they allow positioning of the organism at a favorable depth for light or nutrient acquisition. This Microcystis aeruginosa (strain PCC 7806) protein is Gas vesicle protein F.